An 825-amino-acid chain; its full sequence is Tuftelin-interacting protein 11 (825 aa).

The tract at residues 1–135 is disordered; that stretch reads MSMSHLYGKD…RTFAGGIKSN (135 aa). The segment covering 11-25 has biased composition (acidic residues); sequence EDSDGVEMENFEITD. 2 stretches are compositionally biased toward basic and acidic residues: residues 41–61 and 85–114; these read QTKE…DERP and PAAE…EAKK. Residues 122–135 are compositionally biased toward polar residues; that stretch reads KPSQRTFAGGIKSN. Residues 145–191 enclose the G-patch domain; that stretch reads TKGIGQKLLQKMGYVQGRGLGKNAQGIIAPIEAKQRKGKGAVGAYGS.

Belongs to the TFP11/STIP family. In terms of assembly, identified in the spliceosome C complex.

The protein localises to the nucleus. In terms of biological role, involved in pre-mRNA splicing, specifically in spliceosome disassembly during late-stage splicing events. The sequence is that of Tuftelin-interacting protein 11 (tfip11) from Xenopus tropicalis (Western clawed frog).